The following is a 914-amino-acid chain: Translation initiation factor IF-2 (914 aa).

Disordered regions lie at residues 52-84 (GGGK…VKAP) and 98-326 (AGGN…GVRL). The segment covering 57–68 (AEGAAKAPAKAA) has biased composition (low complexity). The span at 69–84 (AKGDAKTAAKGDVKAP) shows a compositional bias: basic and acidic residues. Positions 98–138 (AGGNGEAAAPPAQPGGTATTPAAQATPEAPARPGPAAARPS) are enriched in low complexity. Composition is skewed to pro residues over residues 139–169 (APAP…PAPK) and 193–207 (PRPV…PGAP). The span at 236–296 (RPGGGRPGGP…GAAGAFGRPG (61 aa)) shows a compositional bias: gly residues. Positions 300–309 (RRGRKSKRQK) are enriched in basic residues. Positions 421 to 581 (TRPPVVTVMG…AVLLTADAAL (161 aa)) constitute a tr-type G domain. GTP-binding positions include 430–437 (GHVDHGKT), 469–473 (DTPGH), and 523–526 (NKID).

The protein belongs to the TRAFAC class translation factor GTPase superfamily. Classic translation factor GTPase family. IF-2 subfamily.

It localises to the cytoplasm. Its function is as follows. One of the essential components for the initiation of protein synthesis. Protects formylmethionyl-tRNA from spontaneous hydrolysis and promotes its binding to the 30S ribosomal subunits. Also involved in the hydrolysis of GTP during the formation of the 70S ribosomal complex. This is Translation initiation factor IF-2 from Mycobacterium avium (strain 104).